Reading from the N-terminus, the 492-residue chain is Ketol-acid reductoisomerase (NADP(+)) (492 aa).

The KARI N-terminal Rossmann domain occupies 14–208; it reads LDQLGRCRFM…GGHKAGVLES (195 aa). NADP(+)-binding positions include 45 to 48, arginine 68, arginine 76, serine 78, and 108 to 110; these read CGAQ and DKQ. Histidine 132 is a catalytic residue. Residue glycine 158 coordinates NADP(+). 2 consecutive KARI C-terminal knotted domains span residues 209–344 and 345–485; these read SFVA…NAPK and YDGK…MTDM. Residues aspartate 217, glutamate 221, glutamate 389, and glutamate 393 each contribute to the Mg(2+) site. Serine 414 contributes to the substrate binding site.

The protein belongs to the ketol-acid reductoisomerase family. Requires Mg(2+) as cofactor.

The enzyme catalyses (2R)-2,3-dihydroxy-3-methylbutanoate + NADP(+) = (2S)-2-acetolactate + NADPH + H(+). It carries out the reaction (2R,3R)-2,3-dihydroxy-3-methylpentanoate + NADP(+) = (S)-2-ethyl-2-hydroxy-3-oxobutanoate + NADPH + H(+). It functions in the pathway amino-acid biosynthesis; L-isoleucine biosynthesis; L-isoleucine from 2-oxobutanoate: step 2/4. It participates in amino-acid biosynthesis; L-valine biosynthesis; L-valine from pyruvate: step 2/4. In terms of biological role, involved in the biosynthesis of branched-chain amino acids (BCAA). Catalyzes an alkyl-migration followed by a ketol-acid reduction of (S)-2-acetolactate (S2AL) to yield (R)-2,3-dihydroxy-isovalerate. In the isomerase reaction, S2AL is rearranged via a Mg-dependent methyl migration to produce 3-hydroxy-3-methyl-2-ketobutyrate (HMKB). In the reductase reaction, this 2-ketoacid undergoes a metal-dependent reduction by NADPH to yield (R)-2,3-dihydroxy-isovalerate. This is Ketol-acid reductoisomerase (NADP(+)) from Haemophilus influenzae (strain PittGG).